The chain runs to 510 residues: NAD(P)H-quinone oxidoreductase subunit 2 A, chloroplastic (510 aa).

13 helical membrane passes run 31–51 (FIFPECILIFGLILLLMIDLT), 57–77 (TPWLYFISSTSLVMSITALLF), 99–119 (IFQFLILLCSTLCIPLSVEYI), 124–144 (MAITEFLLFVLTATLGGMFLC), 149–169 (LITIFVAPECFSLCSYLLSGY), 183–203 (YLLMGGASSSILVYGFSWLYG), 229–249 (ISIALISITVGIGFKLSPAPF), 295–315 (WHLLLEILAILSMILGNLIAI), 323–343 (MLAYSSIGQIGYVIIGIIVGD), 354–374 (YMLFYIAMNLGTFACIVLFGL), 395–415 (ALSSALCLLSLGGIPPLAGFF), 418–438 (LYLFWCGWQAGLYFLVSIGLL), and 484–504 (MIVCVIASTIPGISMNPIIAI).

The protein belongs to the complex I subunit 2 family. NDH is composed of at least 16 different subunits, 5 of which are encoded in the nucleus.

It is found in the plastid. It localises to the chloroplast thylakoid membrane. It carries out the reaction a plastoquinone + NADH + (n+1) H(+)(in) = a plastoquinol + NAD(+) + n H(+)(out). The enzyme catalyses a plastoquinone + NADPH + (n+1) H(+)(in) = a plastoquinol + NADP(+) + n H(+)(out). Its function is as follows. NDH shuttles electrons from NAD(P)H:plastoquinone, via FMN and iron-sulfur (Fe-S) centers, to quinones in the photosynthetic chain and possibly in a chloroplast respiratory chain. The immediate electron acceptor for the enzyme in this species is believed to be plastoquinone. Couples the redox reaction to proton translocation, and thus conserves the redox energy in a proton gradient. The protein is NAD(P)H-quinone oxidoreductase subunit 2 A, chloroplastic of Nymphaea alba (White water-lily).